A 394-amino-acid chain; its full sequence is Dual-specificity RNA methyltransferase RlmN (394 aa).

The Proton acceptor role is filled by E116. The Radical SAM core domain maps to 122 to 365 (EEDRGTLCVS…SPIRTPRGED (244 aa)). The cysteines at positions 129 and 370 are disulfide-linked. Residues C136, C140, and C143 each contribute to the [4Fe-4S] cluster site. S-adenosyl-L-methionine is bound by residues 196–197 (GE), S228, 250–252 (SFH), and N327. The active-site S-methylcysteine intermediate is the C370.

Belongs to the radical SAM superfamily. RlmN family. It depends on [4Fe-4S] cluster as a cofactor.

It is found in the cytoplasm. The catalysed reaction is adenosine(2503) in 23S rRNA + 2 reduced [2Fe-2S]-[ferredoxin] + 2 S-adenosyl-L-methionine = 2-methyladenosine(2503) in 23S rRNA + 5'-deoxyadenosine + L-methionine + 2 oxidized [2Fe-2S]-[ferredoxin] + S-adenosyl-L-homocysteine. It catalyses the reaction adenosine(37) in tRNA + 2 reduced [2Fe-2S]-[ferredoxin] + 2 S-adenosyl-L-methionine = 2-methyladenosine(37) in tRNA + 5'-deoxyadenosine + L-methionine + 2 oxidized [2Fe-2S]-[ferredoxin] + S-adenosyl-L-homocysteine. Its function is as follows. Specifically methylates position 2 of adenine 2503 in 23S rRNA and position 2 of adenine 37 in tRNAs. m2A2503 modification seems to play a crucial role in the proofreading step occurring at the peptidyl transferase center and thus would serve to optimize ribosomal fidelity. In Dinoroseobacter shibae (strain DSM 16493 / NCIMB 14021 / DFL 12), this protein is Dual-specificity RNA methyltransferase RlmN.